The sequence spans 288 residues: MAAKIIDGKTIAQQVRSEVAQKVQARIAAGLRAPGLAVVLVGSNPASQIYVASKRKACEEVGFVSRSYDLPETTSEAELLELIDALNADNTIDGILVQLPLPAGIDNVKVLERIHPDKDVDGFHPYNVGRLCQRAPRLRPCTPRGIVTLLERYNIDTFGLNAVVIGASNIVGRPMSMELLLAGCTTTVTHRFTKNLRHHVENADLLIVAVGKPGFIPGDWIKEGAIVIDVGINRLENGKVVGDVVFEDAAKRASYITPVPGGVGPMTVATLIENTLQACVEYHDPQDE.

NADP(+) is bound by residues 166 to 168 (GAS) and isoleucine 232.

The protein belongs to the tetrahydrofolate dehydrogenase/cyclohydrolase family. Homodimer.

The catalysed reaction is (6R)-5,10-methylene-5,6,7,8-tetrahydrofolate + NADP(+) = (6R)-5,10-methenyltetrahydrofolate + NADPH. It carries out the reaction (6R)-5,10-methenyltetrahydrofolate + H2O = (6R)-10-formyltetrahydrofolate + H(+). The protein operates within one-carbon metabolism; tetrahydrofolate interconversion. Its function is as follows. Catalyzes the oxidation of 5,10-methylenetetrahydrofolate to 5,10-methenyltetrahydrofolate and then the hydrolysis of 5,10-methenyltetrahydrofolate to 10-formyltetrahydrofolate. The sequence is that of Bifunctional protein FolD from Escherichia coli O139:H28 (strain E24377A / ETEC).